The sequence spans 82 residues: uncharacterized protein (82 aa).

In terms of biological role, this protein may be involved in virus assembly. This is an uncharacterized protein from Sulfolobus spindle-shape virus 1 (SSV1).